Consider the following 119-residue polypeptide: Large ribosomal subunit protein bL20 (119 aa).

The protein belongs to the bacterial ribosomal protein bL20 family.

In terms of biological role, binds directly to 23S ribosomal RNA and is necessary for the in vitro assembly process of the 50S ribosomal subunit. It is not involved in the protein synthesizing functions of that subunit. This is Large ribosomal subunit protein bL20 from Clostridium tetani (strain Massachusetts / E88).